The sequence spans 303 residues: Endo-1,3;1,4-beta-D-glucanase (303 aa).

Positions 1 to 43 (MPSSAQVLLCLAAVLAAAAATTAEAHSQCLDNPPDRSIHGRQL) are cleaved as a signal peptide. N-linked (GlcNAc...) asparagine glycosylation is found at asparagine 115, asparagine 197, and asparagine 257.

Post-translationally, glycosylated.

It localises to the secreted. In terms of biological role, plays a role in control of plant growth. Mediates specific degradation of cell wall (1,3)(1,4)-beta-D-glucans and is related to auxin-mediated growth and development of cereal coleoptiles. In Zea mays (Maize), this protein is Endo-1,3;1,4-beta-D-glucanase.